The primary structure comprises 145 residues: D-aminoacyl-tRNA deacylase (145 aa).

Residues 137–138 carry the Gly-cisPro motif, important for rejection of L-amino acids motif; sequence GP.

Belongs to the DTD family. As to quaternary structure, homodimer.

It localises to the cytoplasm. It catalyses the reaction glycyl-tRNA(Ala) + H2O = tRNA(Ala) + glycine + H(+). The catalysed reaction is a D-aminoacyl-tRNA + H2O = a tRNA + a D-alpha-amino acid + H(+). In terms of biological role, an aminoacyl-tRNA editing enzyme that deacylates mischarged D-aminoacyl-tRNAs. Also deacylates mischarged glycyl-tRNA(Ala), protecting cells against glycine mischarging by AlaRS. Acts via tRNA-based rather than protein-based catalysis; rejects L-amino acids rather than detecting D-amino acids in the active site. By recycling D-aminoacyl-tRNA to D-amino acids and free tRNA molecules, this enzyme counteracts the toxicity associated with the formation of D-aminoacyl-tRNA entities in vivo and helps enforce protein L-homochirality. The sequence is that of D-aminoacyl-tRNA deacylase from Photobacterium profundum (strain SS9).